The following is a 734-amino-acid chain: MALRFPRFSQGLAQDPTTRRIWFGIATAHDFESHDDITEERLYQNIFASHFGQLAIIFLWTSGNLFHVAWQGNFESWVQDPLHVRPIAHAIWDPHFGQPAVEAFTRGGALGPVNIAYSGVYQWWYTIGLRTNEDLYTGALFLLFLSAISLIAGWLHLQPKWKPSVSWFKNAESRLNHHLSGLFGVSSLAWTGHLVHVAIPASRGEYVRWNNFLDVLPHPQGLGPLFTGQWNLYAQNPDSSSHLFGTAEGAGTAILTLLGGFHPQTQSLWLTDMAHHHLAIAFIFLVAGHMYRTNFGIGHSMKDLLDAHIPPGGRLGRGHKGLYDTINNSLHFQLGLALASLGVITSLVAQHMYSLPAYAFIAQDFTTQAALYTHHQYIAGFIMTGAFAHGAIFFIRDYNPEQNEDNVLARMLDHKEAIISHLSWASLFLGFHTLGLYVHNDVMLAFGTPEKQILIEPIFAQWIQSAHGKTSYGFDVLLSSTTGPAFNAGRSIWLPGWLNAVNENSNSLFLTIGPGDFLVHHAIALGLHTTTLILVKGALDARGSKLMPDKKDFGYSFPCDGPGRGGTCDISAWDAFYLAVFWMLNTIGWVTFYWHWKHITLWQGNVSQFNESSTYLMGWLRDYLWLNSSQLINGYNPFGMNSLSVWAWMFLFGHLVWATGFMFLISWRGYWQELIETLAWAHERTPLANLIRWRDKPVALSIVQARLVGLAHFSVGYIFTYAAFLIASTSGKFG.

Transmembrane regions (helical) follow at residues 46–69 (IFAS…FHVA), 135–158 (LYTG…LHLQ), 175–199 (LNHH…HVAI), 273–291 (MAHH…GHMY), 330–353 (LHFQ…QHMY), 369–395 (AALY…IFFI), 417–439 (AIIS…LYVH), and 517–535 (FLVH…LILV). 2 residues coordinate [4Fe-4S] cluster: cysteine 559 and cysteine 568. 2 helical membrane-spanning segments follow: residues 575-596 (AFYL…YWHW) and 643-665 (LSVW…MFLI). Chlorophyll a is bound by residues histidine 654, methionine 662, and tyrosine 670. Tryptophan 671 is a binding site for phylloquinone. Residues 707 to 727 (LVGLAHFSVGYIFTYAAFLIA) traverse the membrane as a helical segment.

This sequence belongs to the PsaA/PsaB family. In terms of assembly, the PsaA/B heterodimer binds the P700 chlorophyll special pair and subsequent electron acceptors. PSI consists of a core antenna complex that captures photons, and an electron transfer chain that converts photonic excitation into a charge separation. The eukaryotic PSI reaction center is composed of at least 11 subunits. It depends on P700 is a chlorophyll a/chlorophyll a' dimer, A0 is one or more chlorophyll a, A1 is one or both phylloquinones and FX is a shared 4Fe-4S iron-sulfur center. as a cofactor.

Its subcellular location is the plastid. The protein localises to the chloroplast thylakoid membrane. It carries out the reaction reduced [plastocyanin] + hnu + oxidized [2Fe-2S]-[ferredoxin] = oxidized [plastocyanin] + reduced [2Fe-2S]-[ferredoxin]. In terms of biological role, psaA and PsaB bind P700, the primary electron donor of photosystem I (PSI), as well as the electron acceptors A0, A1 and FX. PSI is a plastocyanin-ferredoxin oxidoreductase, converting photonic excitation into a charge separation, which transfers an electron from the donor P700 chlorophyll pair to the spectroscopically characterized acceptors A0, A1, FX, FA and FB in turn. Oxidized P700 is reduced on the lumenal side of the thylakoid membrane by plastocyanin. This is Photosystem I P700 chlorophyll a apoprotein A2 from Solanum tuberosum (Potato).